We begin with the raw amino-acid sequence, 642 residues long: Threonine--tRNA ligase (642 aa).

The TGS domain maps to 1–61; that stretch reads MPIITLPDGS…SEDANLEIIT (61 aa). The catalytic stretch occupies residues 243 to 534; that stretch reads DHRKIGKALN…ITEEYAGFFP (292 aa). C334, H385, and H511 together coordinate Zn(2+).

Belongs to the class-II aminoacyl-tRNA synthetase family. Homodimer. It depends on Zn(2+) as a cofactor.

It localises to the cytoplasm. It catalyses the reaction tRNA(Thr) + L-threonine + ATP = L-threonyl-tRNA(Thr) + AMP + diphosphate + H(+). Catalyzes the attachment of threonine to tRNA(Thr) in a two-step reaction: L-threonine is first activated by ATP to form Thr-AMP and then transferred to the acceptor end of tRNA(Thr). Also edits incorrectly charged L-seryl-tRNA(Thr). The chain is Threonine--tRNA ligase from Histophilus somni (strain 2336) (Haemophilus somnus).